Consider the following 236-residue polypeptide: Phosphoribosylaminoimidazole-succinocarboxamide synthase (236 aa).

This sequence belongs to the SAICAR synthetase family.

It catalyses the reaction 5-amino-1-(5-phospho-D-ribosyl)imidazole-4-carboxylate + L-aspartate + ATP = (2S)-2-[5-amino-1-(5-phospho-beta-D-ribosyl)imidazole-4-carboxamido]succinate + ADP + phosphate + 2 H(+). The protein operates within purine metabolism; IMP biosynthesis via de novo pathway; 5-amino-1-(5-phospho-D-ribosyl)imidazole-4-carboxamide from 5-amino-1-(5-phospho-D-ribosyl)imidazole-4-carboxylate: step 1/2. This Coprothermobacter proteolyticus (strain ATCC 35245 / DSM 5265 / OCM 4 / BT) protein is Phosphoribosylaminoimidazole-succinocarboxamide synthase.